The following is a 66-amino-acid chain: MKMSALFVIFGLALLFCNSFAAELKATGRGCGGLMDGCDGKSTFCCSGFNCSPTWKWCVYARPGRR.

The first 21 residues, 1 to 21, serve as a signal peptide directing secretion; the sequence is MKMSALFVIFGLALLFCNSFA. Positions 22-29 are excised as a propeptide; the sequence is AELKATGR. Disulfide bonds link Cys-31–Cys-46, Cys-38–Cys-51, and Cys-45–Cys-58. Pro-63 carries the proline amide modification.

The protein belongs to the neurotoxin 10 (Hwtx-1) family. 46 (Jztx-7/10/12) subfamily. In terms of tissue distribution, expressed by the venom gland.

The protein resides in the secreted. Functionally, probable ion channel inhibitor. The chain is U1-theraphotoxin-Cg1d 1 from Chilobrachys guangxiensis (Chinese earth tiger tarantula).